The sequence spans 634 residues: MTEAENRVTLGFEAEVKQLLHLMIHSLYGNKEIFLRELISNASDAADKLRFSALGNDALYEGDSRLRVRIEFDKAARTLSISDNGIGMTREEVQHNIGTIARSGTRHFFESLTGDEAKDSQLIGQFGVGFYSAFIVADKVVLETRKAGVPAEEGARWESSGEGSYTLETLTRPERGTRVTLHLREGEDEFLDGWKLRAIIRKFSDHISLPIEMKRETGEPKEGEEAPAEVWETVNSASALWAKNRDEITDEAYDEFYKHVSHDFQEPLARVHSRVEGTNEYTLLLYIPKHAPFDLWDRDSKRGVKLYVRKVFIMEDSDKLMPRYLRFVRGVIDSDSLPLNVSREILQENKQLEKIRGGAVKKVLGLLEDLANNEPEKYQAFWKEFGQVLKEGLIEDFANKDRLAKLLRFSSTHTDSEEQTVTLDEYVSRMKEGQDKIYFVSAESFGAARNSPHLEIFRKKDIEVLLLSDRIDEWLVSYLTEYEGKPLQSVARGDLDLGKLEGEEEKAEAAAEKEAFAPLTERLKKALEAKVNDVRLSHRLTDSPACLISESYGMSRTMERIMKSAGQNIPGSKPILEINPHHGLIARLNTEADQTRFQDLASLLLDQAVLAEGGQLDDPAEFVHKLNGLLQSLL.

Residues 1-343 (MTEAENRVTL…SDSLPLNVSR (343 aa)) form an a; substrate-binding region. A b region spans residues 344–560 (EILQENKQLE…SYGMSRTMER (217 aa)). The segment at 561 to 634 (IMKSAGQNIP…KLNGLLQSLL (74 aa)) is c.

It belongs to the heat shock protein 90 family. As to quaternary structure, homodimer.

It localises to the cytoplasm. Molecular chaperone. Has ATPase activity. This Methylococcus capsulatus (strain ATCC 33009 / NCIMB 11132 / Bath) protein is Chaperone protein HtpG.